A 186-amino-acid chain; its full sequence is Ribosome-recycling factor (186 aa).

The protein belongs to the RRF family.

It is found in the cytoplasm. In terms of biological role, responsible for the release of ribosomes from messenger RNA at the termination of protein biosynthesis. May increase the efficiency of translation by recycling ribosomes from one round of translation to another. In Brucella abortus (strain S19), this protein is Ribosome-recycling factor.